The sequence spans 355 residues: uncharacterized protein (355 aa).

The first 27 residues, 1–27 (MESPIRTARRTLPLLIGATCLVLALTG), serve as a signal peptide directing secretion. Residue cysteine 28 is the site of N-palmitoyl cysteine attachment. A lipid anchor (S-diacylglycerol cysteine) is attached at cysteine 28. The tract at residues 33 to 53 (GPAQARPTPSASTSPKQAPAL) is disordered. The span at 39–48 (PTPSASTSPK) shows a compositional bias: polar residues.

The protein localises to the cell membrane. This is an uncharacterized protein from Streptomyces coelicolor (strain ATCC BAA-471 / A3(2) / M145).